Reading from the N-terminus, the 387-residue chain is Phosphoglycerate kinase (387 aa).

Substrate-binding positions include 21–23 (DLN), arginine 36, 59–62 (HLGR), arginine 113, and arginine 146. ATP contacts are provided by residues lysine 197, glutamate 314, and 340–343 (GGDT).

Belongs to the phosphoglycerate kinase family. In terms of assembly, monomer.

It localises to the cytoplasm. It carries out the reaction (2R)-3-phosphoglycerate + ATP = (2R)-3-phospho-glyceroyl phosphate + ADP. It participates in carbohydrate degradation; glycolysis; pyruvate from D-glyceraldehyde 3-phosphate: step 2/5. The chain is Phosphoglycerate kinase from Sodalis glossinidius (strain morsitans).